A 244-amino-acid chain; its full sequence is 1-(5-phosphoribosyl)-5-[(5-phosphoribosylamino)methylideneamino] imidazole-4-carboxamide isomerase (244 aa).

Asp-9 acts as the Proton acceptor in catalysis. The Proton donor role is filled by Asp-131.

This sequence belongs to the HisA/HisF family.

It is found in the cytoplasm. The catalysed reaction is 1-(5-phospho-beta-D-ribosyl)-5-[(5-phospho-beta-D-ribosylamino)methylideneamino]imidazole-4-carboxamide = 5-[(5-phospho-1-deoxy-D-ribulos-1-ylimino)methylamino]-1-(5-phospho-beta-D-ribosyl)imidazole-4-carboxamide. It functions in the pathway amino-acid biosynthesis; L-histidine biosynthesis; L-histidine from 5-phospho-alpha-D-ribose 1-diphosphate: step 4/9. The sequence is that of 1-(5-phosphoribosyl)-5-[(5-phosphoribosylamino)methylideneamino] imidazole-4-carboxamide isomerase from Campylobacter jejuni subsp. jejuni serotype O:6 (strain 81116 / NCTC 11828).